A 107-amino-acid polypeptide reads, in one-letter code: U1-lycotoxin-Ls1b (107 aa).

The first 20 residues, 1 to 20, serve as a signal peptide directing secretion; that stretch reads MMKVLVVIALLVTLISYSSS. A propeptide spanning residues 21–41 is cleaved from the precursor; that stretch reads EGIDDLEADELLSLMANEQTR. 4 cysteine pairs are disulfide-bonded: Cys-44–Cys-59, Cys-51–Cys-68, Cys-58–Cys-86, and Cys-70–Cys-84.

Belongs to the neurotoxin 19 (CSTX) family. 04 (U1-Lctx) subfamily. In terms of tissue distribution, expressed by the venom gland.

It localises to the secreted. In Lycosa singoriensis (Wolf spider), this protein is U1-lycotoxin-Ls1b.